The following is a 203-amino-acid chain: ATP-dependent Clp protease proteolytic subunit (203 aa).

Residue S107 is the Nucleophile of the active site. H132 is a catalytic residue.

Belongs to the peptidase S14 family. As to quaternary structure, fourteen ClpP subunits assemble into 2 heptameric rings which stack back to back to give a disk-like structure with a central cavity, resembling the structure of eukaryotic proteasomes.

Its subcellular location is the cytoplasm. It catalyses the reaction Hydrolysis of proteins to small peptides in the presence of ATP and magnesium. alpha-casein is the usual test substrate. In the absence of ATP, only oligopeptides shorter than five residues are hydrolyzed (such as succinyl-Leu-Tyr-|-NHMec, and Leu-Tyr-Leu-|-Tyr-Trp, in which cleavage of the -Tyr-|-Leu- and -Tyr-|-Trp bonds also occurs).. Cleaves peptides in various proteins in a process that requires ATP hydrolysis. Has a chymotrypsin-like activity. Plays a major role in the degradation of misfolded proteins. This chain is ATP-dependent Clp protease proteolytic subunit, found in Shewanella frigidimarina (strain NCIMB 400).